The primary structure comprises 227 residues: Orotidine 5'-phosphate decarboxylase (227 aa).

Substrate-binding positions include Asp-8, Lys-30, 57-66 (DLKFHDIPNT), Thr-116, Arg-177, Gln-186, Gly-206, and Arg-207. Residue Lys-59 is the Proton donor of the active site.

The protein belongs to the OMP decarboxylase family. Type 1 subfamily. As to quaternary structure, homodimer.

It carries out the reaction orotidine 5'-phosphate + H(+) = UMP + CO2. It functions in the pathway pyrimidine metabolism; UMP biosynthesis via de novo pathway; UMP from orotate: step 2/2. Catalyzes the decarboxylation of orotidine 5'-monophosphate (OMP) to uridine 5'-monophosphate (UMP). This Acinetobacter baylyi (strain ATCC 33305 / BD413 / ADP1) protein is Orotidine 5'-phosphate decarboxylase.